Consider the following 181-residue polypeptide: MMEAAAKRVHIIQGEYKVVSDPDVVMTTILGSCVAACLRDPVAGLGGMNHFLLPGTGNVTGGDATRYGVHLMELLINGLLKQGARRDRLEAKVFGGAKTIASFSNVGEQNAIFAMQFLKDEGIPVISSSTGGDHGRKIEFWPVSGRARQHPLSGAETQKTVAMETRPVPAPKPVANDIEFF.

Belongs to the CheD family.

The enzyme catalyses L-glutaminyl-[protein] + H2O = L-glutamyl-[protein] + NH4(+). In terms of biological role, probably deamidates glutamine residues to glutamate on methyl-accepting chemotaxis receptors (MCPs), playing an important role in chemotaxis. This chain is Probable chemoreceptor glutamine deamidase CheD, found in Agrobacterium fabrum (strain C58 / ATCC 33970) (Agrobacterium tumefaciens (strain C58)).